The primary structure comprises 368 residues: Anti-sigma-X factor RsiX (368 aa).

The span at 73-87 (QPQQKEASQENAVTK) shows a compositional bias: polar residues. Residues 73-101 (QPQQKEASQENAVTKTETEDSPKAASSLD) form a disordered region.

It localises to the cell membrane. Its function is as follows. The anti-sigma factor for extracytoplasmic function (ECF) sigma factor SigX, inhibits SigX activity and stabilizes it. The chain is Anti-sigma-X factor RsiX (rsiX) from Bacillus subtilis (strain 168).